We begin with the raw amino-acid sequence, 598 residues long: Aspartate--tRNA(Asp/Asn) ligase (598 aa).

Glu174 lines the L-aspartate pocket. The interval 198-201 (QQLK) is aspartate. Arg220 serves as a coordination point for L-aspartate. ATP contacts are provided by residues 220 to 222 (RDE) and Gln229. Residue His458 participates in L-aspartate binding. Glu492 serves as a coordination point for ATP. Arg499 contributes to the L-aspartate binding site. Residue 544-547 (GIDR) participates in ATP binding.

Belongs to the class-II aminoacyl-tRNA synthetase family. Type 1 subfamily. Homodimer.

The protein resides in the cytoplasm. It carries out the reaction tRNA(Asx) + L-aspartate + ATP = L-aspartyl-tRNA(Asx) + AMP + diphosphate. Its function is as follows. Aspartyl-tRNA synthetase with relaxed tRNA specificity since it is able to aspartylate not only its cognate tRNA(Asp) but also tRNA(Asn). Reaction proceeds in two steps: L-aspartate is first activated by ATP to form Asp-AMP and then transferred to the acceptor end of tRNA(Asp/Asn). This is Aspartate--tRNA(Asp/Asn) ligase from Dehalococcoides mccartyi (strain ATCC BAA-2266 / KCTC 15142 / 195) (Dehalococcoides ethenogenes (strain 195)).